A 951-amino-acid polypeptide reads, in one-letter code: MEKTYNPQDIEQPLYEHWEKQGYFKPNGDESQESFCIMIPPPNVTGSLHMGHAFQQTIMDTMIRYQRMQGKNTLWQVGTDHAGIATQMVVERKIAAEEGKTRHDYGREAFIDKIWEWKAESGGTITRQMRRLGNSVDWERERFTMDEGLSNAVKEVFVRLYKEDLIYRGKRLVNWDPKLRTAISDLEVENRESKGSMWHIRYPLADGAKTADGKDYLVVATTRPETLLGDTGVAVNPEDPRYKDLIGKYVILPLVNRRIPIVGDEHADMEKGTGCVKITPAHDFNDYEVGKRHALPMINILTFDGDIRESAQVFDTKGNESDVYSSEIPAEFQKLERFAARKAVVAAVDALGLLEEIKPHDLTVPYGDRGGVVIEPMLTDQWYVRADVLAKPAVEAVENGDIQFVPKQYENMYFSWMRDIQDWCISRQLWWGHRIPAWYDEAGNVYVGRNEEEVRKENNLGANVALRQDEDVLDTWFSSALWTFSTLGWPENTDALRQFHPTSVMVSGFDIIFFWIARMIMMTMHFIKDENGKPQVPFHTVYMTGLIRDDEGQKMSKSKGNVIDPLDMVDGISLPELLEKRTGNMMQPQLADKIRKRTEKQFPNGIEPHGTDALRFTLAALASTGRDINWDMKRLEGYRNFCNKLWNASRFVLMNTEGQDCGFNGGEMTLSLADRWILAEFNQTIKAYREALDSFRFDIAAGILYEFTWNQFCDWYLELTKPVMNGGTEAELRGTRHTLVTVLEGLLRLAHPIIPFITETIWQRVKVLCGITADTIMLQPFPQYDASQVDEAALADTEWLKQAIVAVRNIRAEMNIAPGKPLELLLRGCSADAERRVNENRGFLQTLARLESITVLPADDKGPVSVTKIIDGAELLIPMAGLINKEDELARLAKEVAKIEGEISRIENKLANEGFVARAPEAVIAKEREKLEGYAEAKAKLIEQQAVIAAL.

Positions 42–52 match the 'HIGH' region motif; the sequence is PNVTGSLHMGH. Positions 554 to 558 match the 'KMSKS' region motif; it reads KMSKS. Residue Lys-557 participates in ATP binding. Positions 880-944 form a coiled coil; that stretch reads AGLINKEDEL…AEAKAKLIEQ (65 aa).

The protein belongs to the class-I aminoacyl-tRNA synthetase family. ValS type 1 subfamily. As to quaternary structure, monomer.

Its subcellular location is the cytoplasm. The catalysed reaction is tRNA(Val) + L-valine + ATP = L-valyl-tRNA(Val) + AMP + diphosphate. Catalyzes the attachment of valine to tRNA(Val). As ValRS can inadvertently accommodate and process structurally similar amino acids such as threonine, to avoid such errors, it has a 'posttransfer' editing activity that hydrolyzes mischarged Thr-tRNA(Val) in a tRNA-dependent manner. This Shigella flexneri protein is Valine--tRNA ligase.